Consider the following 298-residue polypeptide: GTPase Era (298 aa).

The 169-residue stretch at 8-176 (HCGSVAVIGR…VRDVLKLLPE (169 aa)) folds into the Era-type G domain. The tract at residues 16-23 (GRPNVGKS) is G1. A GTP-binding site is contributed by 16 to 23 (GRPNVGKS). Residues 42–46 (QTTRH) are G2. Residues 63–66 (DTPG) form a G3 region. GTP-binding positions include 63 to 67 (DTPGL) and 125 to 128 (NKID). The tract at residues 125–128 (NKID) is G4. The interval 155–157 (ISA) is G5. A KH type-2 domain is found at 199 to 283 (VREQLMRQLG…FLETWVRVRE (85 aa)).

Belongs to the TRAFAC class TrmE-Era-EngA-EngB-Septin-like GTPase superfamily. Era GTPase family. Monomer.

The protein localises to the cytoplasm. Its subcellular location is the cell inner membrane. Functionally, an essential GTPase that binds both GDP and GTP, with rapid nucleotide exchange. Plays a role in 16S rRNA processing and 30S ribosomal subunit biogenesis and possibly also in cell cycle regulation and energy metabolism. In Stenotrophomonas maltophilia (strain K279a), this protein is GTPase Era.